The sequence spans 730 residues: Kinesin-like protein KIF2C (730 aa).

Residues 1–256 (MERLVATRLV…MDCHRISMAD (256 aa)) form a globular region. Residues 79-98 (NMPPQRNVSSQNHKRKTISK) are disordered. A negative regulator of microtubule-binding region spans residues 211–242 (EQRAQNYERRMKRAQDYDTSVPNWEFGKMIKE). Positions 262–592 (RICVCVRKRP…LRYADRVKEL (331 aa)) constitute a Kinesin motor domain. ATP-binding positions include Arg268 and 352 to 359 (GQTGSGKT). A coiled-coil region spans residues 599–730 (TNDDNLQMED…QISKKKRSNK (132 aa)).

The protein belongs to the TRAFAC class myosin-kinesin ATPase superfamily. Kinesin family. MCAK/KIF2 subfamily.

The protein resides in the cytoplasm. It localises to the cytoskeleton. Its subcellular location is the nucleus. The protein localises to the chromosome. It is found in the centromere. The protein resides in the kinetochore. In terms of biological role, promotes ATP-dependent removal of tubulin dimers from microtubules. Regulates the turnover of microtubules at the kinetochore and functions in chromosome segregation during mitosis. May play a role in chromosome congression and may be required for the lateral to end-on conversion of the chromosome-microtubule attachment. This chain is Kinesin-like protein KIF2C (kif2c), found in Xenopus laevis (African clawed frog).